Consider the following 235-residue polypeptide: Chaperone protein TorD (235 aa).

It belongs to the TorD/DmsD family. TorD subfamily.

The protein localises to the cytoplasm. Involved in the biogenesis of TorA. Acts on TorA before the insertion of the molybdenum cofactor and, as a result, probably favors a conformation of the apoenzyme that is competent for acquiring the cofactor. The protein is Chaperone protein TorD of Shewanella amazonensis (strain ATCC BAA-1098 / SB2B).